Here is a 340-residue protein sequence, read N- to C-terminus: Anthranilate phosphoribosyltransferase (340 aa).

5-phospho-alpha-D-ribose 1-diphosphate-binding positions include Gly81, 84–85, Thr89, 91–94, 109–117, and Ala121; these read GD, NIST, and KHGNRNLSS. Gly81 contributes to the anthranilate binding site. Mg(2+) is bound at residue Ser93. Asn112 serves as a coordination point for anthranilate. An anthranilate-binding site is contributed by Arg167. Mg(2+)-binding residues include Asp226 and Glu227.

It belongs to the anthranilate phosphoribosyltransferase family. As to quaternary structure, homodimer. Mg(2+) is required as a cofactor.

It catalyses the reaction N-(5-phospho-beta-D-ribosyl)anthranilate + diphosphate = 5-phospho-alpha-D-ribose 1-diphosphate + anthranilate. The protein operates within amino-acid biosynthesis; L-tryptophan biosynthesis; L-tryptophan from chorismate: step 2/5. Functionally, catalyzes the transfer of the phosphoribosyl group of 5-phosphorylribose-1-pyrophosphate (PRPP) to anthranilate to yield N-(5'-phosphoribosyl)-anthranilate (PRA). The sequence is that of Anthranilate phosphoribosyltransferase from Ruegeria sp. (strain TM1040) (Silicibacter sp.).